We begin with the raw amino-acid sequence, 367 residues long: MVKETHRFEPFTEEPIRLIGEEGEWLGDFPLDLEGEKLRRLYRDMLAARMLDERYTILIRTGKTSFIAPAAGHEAAQVAIAHAIRPGFDWVFPYYRDHGLALALGIPLKELFGQMLATKADPNKGRQMPEHPGSKALNFFTVASPIASHVPPAAGAAISMKLLRTGQVAVCTFGDGATSEGDWYAGINFAAVQGAPAVFVCENNFYAISVDYRHQTHSPTIADKAHAFGIPGYLVDGMDVLASYYVVKEAVERARRGEGPSLVELRVYRYGPHSSADDDSRYRPKEEVAFWRKKDPIPRFRRFLEARGLWNEEWEEDVREEIRAELERGLKEAEEAGPVPPEWMFADVFAEKPWHLLRQEALLKEEL.

Substrate is bound by residues Phe-66, Tyr-95, 128–131 (MPEH), and Ser-144. 94–96 (YYR) provides a ligand contact to thiamine diphosphate. Thiamine diphosphate is bound by residues 144 to 146 (SPI), 174 to 180 (GDGATSE), 204 to 208 (NFYAI), and His-273. Residues Asp-175, Asn-204, and Tyr-206 each coordinate Mg(2+).

Belongs to the BCKDHA family. In terms of assembly, heterotetramer of two alpha and two beta chains. Directly associated with ODBB in the E1 complex. The cofactor is thiamine diphosphate.

It carries out the reaction N(6)-[(R)-lipoyl]-L-lysyl-[protein] + 3-methyl-2-oxobutanoate + H(+) = N(6)-[(R)-S(8)-2-methylpropanoyldihydrolipoyl]-L-lysyl-[protein] + CO2. The branched-chain alpha-keto dehydrogenase complex catalyzes the overall conversion of alpha-keto acids to acyl-CoA and CO(2). It contains multiple copies of three enzymatic components: branched-chain alpha-keto acid decarboxylase (E1), lipoamide acyltransferase (E2) and lipoamide dehydrogenase (E3). The polypeptide is 2-oxoisovalerate dehydrogenase subunit alpha (Thermus thermophilus (strain ATCC BAA-163 / DSM 7039 / HB27)).